A 378-amino-acid polypeptide reads, in one-letter code: DNA replication and repair protein RecF (378 aa).

Residue 31–38 (GENGSGKT) coordinates ATP.

The protein belongs to the RecF family.

It localises to the cytoplasm. Functionally, the RecF protein is involved in DNA metabolism; it is required for DNA replication and normal SOS inducibility. RecF binds preferentially to single-stranded, linear DNA. It also seems to bind ATP. In Teredinibacter turnerae (strain ATCC 39867 / T7901), this protein is DNA replication and repair protein RecF.